We begin with the raw amino-acid sequence, 128 residues long: MKFSDFSQSGKPSKADEYLGLLMAAQAYFHSAHFETKSYARHKAYDFIFSELPDLIDKFGEQYLGYSGRKYTPSIPDASKLPTDTIKMIDRILDQSNSIYKEMPPAIQSTIDDITGMFYQSKYLLSLE.

This is an uncharacterized protein from Enterobacteria phage T4 (Bacteriophage T4).